The sequence spans 102 residues: Large ribosomal subunit protein bL21 (102 aa).

This sequence belongs to the bacterial ribosomal protein bL21 family. As to quaternary structure, part of the 50S ribosomal subunit. Contacts protein L20.

This protein binds to 23S rRNA in the presence of protein L20. The protein is Large ribosomal subunit protein bL21 of Bacillus anthracis (strain A0248).